A 188-amino-acid polypeptide reads, in one-letter code: Elongation factor P (188 aa).

This sequence belongs to the elongation factor P family.

The protein resides in the cytoplasm. It participates in protein biosynthesis; polypeptide chain elongation. Its function is as follows. Involved in peptide bond synthesis. Stimulates efficient translation and peptide-bond synthesis on native or reconstituted 70S ribosomes in vitro. Probably functions indirectly by altering the affinity of the ribosome for aminoacyl-tRNA, thus increasing their reactivity as acceptors for peptidyl transferase. This is Elongation factor P from Nitrobacter hamburgensis (strain DSM 10229 / NCIMB 13809 / X14).